A 551-amino-acid polypeptide reads, in one-letter code: UvrABC system protein C (551 aa).

The GIY-YIG domain occupies 12 to 87 (EKPGVYIFKN…IFKHKPKYNI (76 aa)). The UVR domain occupies 193 to 228 (EFVKDYIEQKMNYHSKMLDFENAAKYRDLLLSFEKL).

Belongs to the UvrC family. Interacts with UvrB in an incision complex.

It localises to the cytoplasm. The UvrABC repair system catalyzes the recognition and processing of DNA lesions. UvrC both incises the 5' and 3' sides of the lesion. The N-terminal half is responsible for the 3' incision and the C-terminal half is responsible for the 5' incision. In Thermosipho africanus (strain TCF52B), this protein is UvrABC system protein C.